A 279-amino-acid polypeptide reads, in one-letter code: uncharacterized protein (279 aa).

6 helical membrane-spanning segments follow: residues 29 to 49 (PYNMIAGAIGAVVLTILALVF), 77 to 97 (VLYALAPLIPLVILVIGGTSL), 105 to 125 (WTKMGVPQAMLIGAIYGIIVT), 147 to 167 (VLGIIIAASVFVAGLKSTGAV), 186 to 206 (TIGPFLMGLITGSGDAAAIAF), and 240 to 260 (PIAGVTIVCAGLAMVSPVEMV).

It belongs to the DcuC/DcuD transporter (TC 2.A.61) family.

The protein localises to the cell membrane. This is an uncharacterized protein from Haemophilus influenzae (strain ATCC 51907 / DSM 11121 / KW20 / Rd).